A 169-amino-acid polypeptide reads, in one-letter code: Menaquinol:cytochrome c reductase iron-sulfur subunit (169 aa).

The Rieske domain maps to glutamate 62–leucine 160. The [2Fe-2S] cluster site is built by cysteine 102, histidine 104, cysteine 123, and histidine 126. Cysteine 107 and cysteine 125 are disulfide-bonded.

It belongs to the Rieske iron-sulfur protein family. The main subunits of the menaquinol:cytochrome c complex are a Rieske-type iron-sulfur protein (QcrA), a cytochrome b (QcrB) and a cytochrome c (QcrC). The cofactor is [2Fe-2S] cluster.

In terms of biological role, component of the menaquinol:cytochrome c reductase complex. The Rieske protein is a high potential 2Fe-2S protein. The chain is Menaquinol:cytochrome c reductase iron-sulfur subunit (qcrA) from Geobacillus thermodenitrificans.